A 715-amino-acid chain; its full sequence is Serine/arginine repetitive matrix protein 5 (715 aa).

The span at 1–13 (MSSPKRSSKPSMS) shows a compositional bias: low complexity. The interval 1 to 715 (MSSPKRSSKP…RSSSSSSKLA (715 aa)) is disordered. Residues 32-59 (LKSTKSATPNRSLVPTKPATSRNSVMSP) are compositionally biased toward polar residues. A compositionally biased stretch (low complexity) spans 60–79 (SSSKSTKSTSTKRAPSNRPS). A compositionally biased stretch (basic residues) spans 80–90 (SRSRVRSKART). A compositionally biased stretch (polar residues) spans 92–104 (SRVSTDTRTSKAS). The segment covering 112-136 (HQRRGTHSRGRTPGRRGSRSSKRSP) has biased composition (basic residues). Composition is skewed to polar residues over residues 213–224 (TPSTAKCQTPTG) and 257–272 (YSPTEMSSRVKSYNQA). The span at 273–285 (STRSRPQSHSQSR) shows a compositional bias: low complexity. Basic residues predominate over residues 286–320 (SPRRSRSGSQKRTHSRVRSHSWKRNHSRARSRTRK). Composition is skewed to basic and acidic residues over residues 359 to 388 (PSKERSHSHSRSSSKERDHRGSSSPRKESG) and 397 to 521 (KQRD…ERDH). The span at 522 to 536 (RRSRSPSKERQRRQS) shows a compositional bias: basic residues. 2 stretches are compositionally biased toward basic and acidic residues: residues 539 to 595 (PNKE…DHSR) and 611 to 628 (SSKEKAHSRSRTPSKEGN). A compositionally biased stretch (polar residues) spans 657–666 (TRTSSLSQNR). Over residues 667–681 (TPSKTSSHSPSTFPS) the composition is skewed to low complexity. Over residues 682 to 715 (GGQTLSQDDSQADATTSKATLPGERSSSSSSKLA) the composition is skewed to polar residues.

This chain is Serine/arginine repetitive matrix protein 5 (SRRM5), found in Homo sapiens (Human).